The sequence spans 600 residues: Proline--tRNA ligase (600 aa).

Belongs to the class-II aminoacyl-tRNA synthetase family. ProS type 1 subfamily. As to quaternary structure, homodimer.

The protein resides in the cytoplasm. It catalyses the reaction tRNA(Pro) + L-proline + ATP = L-prolyl-tRNA(Pro) + AMP + diphosphate. Its function is as follows. Catalyzes the attachment of proline to tRNA(Pro) in a two-step reaction: proline is first activated by ATP to form Pro-AMP and then transferred to the acceptor end of tRNA(Pro). As ProRS can inadvertently accommodate and process non-cognate amino acids such as alanine and cysteine, to avoid such errors it has two additional distinct editing activities against alanine. One activity is designated as 'pretransfer' editing and involves the tRNA(Pro)-independent hydrolysis of activated Ala-AMP. The other activity is designated 'posttransfer' editing and involves deacylation of mischarged Ala-tRNA(Pro). The misacylated Cys-tRNA(Pro) is not edited by ProRS. The sequence is that of Proline--tRNA ligase from Prochlorococcus marinus (strain MIT 9312).